The chain runs to 177 residues: Sec-independent protein translocase protein TatB (177 aa).

A helical membrane pass occupies residues 1-21; that stretch reads MFDFAWSEIAVIGVVALVVIG. A compositionally biased stretch (basic and acidic residues) spans 136 to 146; sequence REKTVSSETAR. The segment at 136 to 177 is disordered; that stretch reads REKTVSSETARRAATAPAFIPPGEAFRSARRAPAFIPPADQG.

Belongs to the TatB family. As to quaternary structure, the Tat system comprises two distinct complexes: a TatABC complex, containing multiple copies of TatA, TatB and TatC subunits, and a separate TatA complex, containing only TatA subunits. Substrates initially bind to the TatABC complex, which probably triggers association of the separate TatA complex to form the active translocon.

It is found in the cell inner membrane. Its function is as follows. Part of the twin-arginine translocation (Tat) system that transports large folded proteins containing a characteristic twin-arginine motif in their signal peptide across membranes. Together with TatC, TatB is part of a receptor directly interacting with Tat signal peptides. TatB may form an oligomeric binding site that transiently accommodates folded Tat precursor proteins before their translocation. This is Sec-independent protein translocase protein TatB from Granulibacter bethesdensis (strain ATCC BAA-1260 / CGDNIH1).